Reading from the N-terminus, the 112-residue chain is Putative pterin-4-alpha-carbinolamine dehydratase (112 aa).

Belongs to the pterin-4-alpha-carbinolamine dehydratase family.

It carries out the reaction (4aS,6R)-4a-hydroxy-L-erythro-5,6,7,8-tetrahydrobiopterin = (6R)-L-erythro-6,7-dihydrobiopterin + H2O. The chain is Putative pterin-4-alpha-carbinolamine dehydratase from Shewanella putrefaciens (strain CN-32 / ATCC BAA-453).